The following is a 209-amino-acid chain: Imidazole glycerol phosphate synthase subunit HisH (209 aa).

The region spanning M1–S205 is the Glutamine amidotransferase type-1 domain. The Nucleophile role is filled by C79. Residues H180 and E182 contribute to the active site.

Heterodimer of HisH and HisF.

Its subcellular location is the cytoplasm. The enzyme catalyses 5-[(5-phospho-1-deoxy-D-ribulos-1-ylimino)methylamino]-1-(5-phospho-beta-D-ribosyl)imidazole-4-carboxamide + L-glutamine = D-erythro-1-(imidazol-4-yl)glycerol 3-phosphate + 5-amino-1-(5-phospho-beta-D-ribosyl)imidazole-4-carboxamide + L-glutamate + H(+). It carries out the reaction L-glutamine + H2O = L-glutamate + NH4(+). Its pathway is amino-acid biosynthesis; L-histidine biosynthesis; L-histidine from 5-phospho-alpha-D-ribose 1-diphosphate: step 5/9. Its function is as follows. IGPS catalyzes the conversion of PRFAR and glutamine to IGP, AICAR and glutamate. The HisH subunit catalyzes the hydrolysis of glutamine to glutamate and ammonia as part of the synthesis of IGP and AICAR. The resulting ammonia molecule is channeled to the active site of HisF. In Bacillus cereus (strain ATCC 14579 / DSM 31 / CCUG 7414 / JCM 2152 / NBRC 15305 / NCIMB 9373 / NCTC 2599 / NRRL B-3711), this protein is Imidazole glycerol phosphate synthase subunit HisH.